Consider the following 147-residue polypeptide: Myoglobin (147 aa).

One can recognise a Globin domain in the interval 2 to 141 (ADFDMVLKCW…IIADMEADYK (140 aa)). Residue H60 coordinates nitrite. H60 contributes to the O2 binding site. Residue H89 participates in heme b binding.

Belongs to the globin family. In terms of assembly, monomeric.

It localises to the cytoplasm. The protein localises to the sarcoplasm. The enzyme catalyses Fe(III)-heme b-[protein] + nitric oxide + H2O = Fe(II)-heme b-[protein] + nitrite + 2 H(+). It carries out the reaction H2O2 + AH2 = A + 2 H2O. Monomeric heme protein which primary function is to store oxygen and facilitate its diffusion within muscle tissues. Reversibly binds oxygen through a pentacoordinated heme iron and enables its timely and efficient release as needed during periods of heightened demand. Depending on the oxidative conditions of tissues and cells, and in addition to its ability to bind oxygen, it also has a nitrite reductase activity whereby it regulates the production of bioactive nitric oxide. Under stress conditions, like hypoxia and anoxia, it also protects cells against reactive oxygen species thanks to its pseudoperoxidase activity. This Gobionotothen gibberifrons (Humped rockcod) protein is Myoglobin (mb).